A 567-amino-acid polypeptide reads, in one-letter code: MAKVSRQAYAEMFGPTTGDRLRLADTGLMIEVEKDFTVYGEEVKFGGGKVIRDGMGQSQRESKDCADTVITNAVIIDHWGIVKADISIKNGRISNIGKAGNPDIQPGITSVIGPGTEIIAGEGMIVTAGGIDTHIHFICPQQIEEALMSGVTTMIGGGTGPATGTFATTCTPGPWHIQRMLQSIDAYPMNIGLLGKGNASLPGGLREQVDAGAIGLKLHEDWGTTPAAIDCCLGVADDTDTQVAIHTDTLNESGFVETTLAAFKGRTIHTYHTEGAGGGHAPDIIRACGESNVLPSSTNPTRPFTVNTLDEHLDMLMVCHHLDASIAEDIAFAESRIRRETIAAEDILHDLGAFSMLSSDSQAMGRVGEVIIRTWQTADKMKAQRGLLPGDTNRNDNFRVKRYISKYTINPAITHGISHVVGSIEVGKYADLVFWKPAFFGVKPSLILKGGSIAAAAMGDPNASIPTPQPVHYRNMFAGIGQGIRHSSLTFISQSAMNANIRDAYGLEKQVEVVKNCRSITKADMIHNDWQPNITVDPETYQVIANGELLTCEPAKVLPMAQRYFLF.

Ni(2+)-binding residues include His-134, His-136, and Lys-217. Lys-217 is subject to N6-carboxylysine. His-219 contributes to the substrate binding site. Residues His-246 and His-272 each contribute to the Ni(2+) site. His-320 (proton donor) is an active-site residue. Ni(2+) is bound at residue Asp-360.

It belongs to the metallo-dependent hydrolases superfamily. Urease alpha subunit family. In terms of assembly, heterotrimer of UreA (gamma), UreB (beta) and UreC (alpha) subunits. Three heterotrimers associate to form the active enzyme. Ni cation is required as a cofactor. Post-translationally, carboxylation allows a single lysine to coordinate two nickel ions.

It is found in the cytoplasm. It catalyses the reaction urea + 2 H2O + H(+) = hydrogencarbonate + 2 NH4(+). The protein operates within nitrogen metabolism; urea degradation; CO(2) and NH(3) from urea (urease route): step 1/1. This Polynucleobacter asymbioticus (strain DSM 18221 / CIP 109841 / QLW-P1DMWA-1) (Polynucleobacter necessarius subsp. asymbioticus) protein is Urease subunit alpha.